A 510-amino-acid chain; its full sequence is NAD(P)H-quinone oxidoreductase subunit 2 B, chloroplastic (510 aa).

A run of 13 helical transmembrane segments spans residues Leu-24–Leu-44, Ile-57–Phe-77, Ile-99–Ile-119, Met-124–Cys-144, Leu-149–Tyr-169, Tyr-183–Gly-203, Pro-227–Ala-247, Trp-295–Ile-315, Met-323–Asp-343, Tyr-354–Leu-374, Ala-392–Ala-412, Leu-418–Leu-438, and Leu-482–Ile-502.

This sequence belongs to the complex I subunit 2 family. As to quaternary structure, NDH is composed of at least 16 different subunits, 5 of which are encoded in the nucleus.

Its subcellular location is the plastid. The protein resides in the chloroplast thylakoid membrane. The enzyme catalyses a plastoquinone + NADH + (n+1) H(+)(in) = a plastoquinol + NAD(+) + n H(+)(out). It carries out the reaction a plastoquinone + NADPH + (n+1) H(+)(in) = a plastoquinol + NADP(+) + n H(+)(out). Functionally, NDH shuttles electrons from NAD(P)H:plastoquinone, via FMN and iron-sulfur (Fe-S) centers, to quinones in the photosynthetic chain and possibly in a chloroplast respiratory chain. The immediate electron acceptor for the enzyme in this species is believed to be plastoquinone. Couples the redox reaction to proton translocation, and thus conserves the redox energy in a proton gradient. The chain is NAD(P)H-quinone oxidoreductase subunit 2 B, chloroplastic from Morus indica (Mulberry).